The chain runs to 321 residues: Hydropyrene synthase (321 aa).

Asp82, Asn225, Ser229, and Glu233 together coordinate Mg(2+). The DDxx(x)D/E motif signature appears at 82–87; sequence DDRAID. The short motif at 225–233 is the NDxxSxxxD/E motif element; that stretch reads NDLHSFARE.

Belongs to the terpene synthase family. Requires Mg(2+) as cofactor.

It carries out the reaction (2E,6E,10E)-geranylgeranyl diphosphate = hydropyrene + diphosphate. The catalysed reaction is (2E,6E,10E)-geranylgeranyl diphosphate + H2O = hydropyrenol + diphosphate. It catalyses the reaction (2E,6E,10E)-geranylgeranyl diphosphate = isoelisabethatriene + diphosphate. The protein operates within secondary metabolite biosynthesis; terpenoid biosynthesis. Terpene synthase that catalyzes the conversion of geranylgeranyl diphosphate (GGPP) into a mixture of diterpenes, including hydropyrene (HP), hydropyrenol (HPol), isoelisabethatriene and traces of isoelisabethatriene B. Hydropyrene is the main product. Some other diterpenoids are also produced in very low quantities. The protein is Hydropyrene synthase of Streptomyces clavuligerus.